The primary structure comprises 132 residues: Small ribosomal subunit protein uS8 (132 aa).

The protein belongs to the universal ribosomal protein uS8 family. In terms of assembly, part of the 30S ribosomal subunit. Contacts proteins S5 and S12.

One of the primary rRNA binding proteins, it binds directly to 16S rRNA central domain where it helps coordinate assembly of the platform of the 30S subunit. The sequence is that of Small ribosomal subunit protein uS8 from Beijerinckia indica subsp. indica (strain ATCC 9039 / DSM 1715 / NCIMB 8712).